Here is a 488-residue protein sequence, read N- to C-terminus: Cobyric acid synthase (488 aa).

The GATase cobBQ-type domain occupies 248–441; that stretch reads VLRVVVPALP…VHGLFDAPDA (194 aa). The active-site Nucleophile is the cysteine 328. Residue histidine 433 is part of the active site.

The protein belongs to the CobB/CobQ family. CobQ subfamily.

The protein operates within cofactor biosynthesis; adenosylcobalamin biosynthesis. Its function is as follows. Catalyzes amidations at positions B, D, E, and G on adenosylcobyrinic A,C-diamide. NH(2) groups are provided by glutamine, and one molecule of ATP is hydrogenolyzed for each amidation. This is Cobyric acid synthase from Burkholderia ambifaria (strain ATCC BAA-244 / DSM 16087 / CCUG 44356 / LMG 19182 / AMMD) (Burkholderia cepacia (strain AMMD)).